A 118-amino-acid chain; its full sequence is Large ribosomal subunit protein bL19 (118 aa).

Belongs to the bacterial ribosomal protein bL19 family.

Its function is as follows. This protein is located at the 30S-50S ribosomal subunit interface and may play a role in the structure and function of the aminoacyl-tRNA binding site. This Teredinibacter turnerae (strain ATCC 39867 / T7901) protein is Large ribosomal subunit protein bL19.